Reading from the N-terminus, the 120-residue chain is Cytochrome c oxidase subunit 5 (120 aa).

S2 carries the blocked amino end (Ser) modification. Positions 76, 84, 99, and 102 each coordinate Zn(2+).

It belongs to the cytochrome c oxidase subunit 5B family. As to quaternary structure, component of the cytochrome c oxidase (complex IV, CIV), a multisubunit enzyme composed of a catalytic core of 3 subunits and several supernumerary subunits. The complex exists as a monomer or a dimer and forms supercomplexes (SCs) in the inner mitochondrial membrane with ubiquinol-cytochrome c oxidoreductase (cytochrome b-c1 complex, complex III, CIII). Slime mold cytochrome c oxidase consists of at least seven different polypeptides species, subunits I, II, III, IV, V, VI, and VIIe/s in order of MW.

It is found in the mitochondrion inner membrane. It functions in the pathway energy metabolism; oxidative phosphorylation. Its function is as follows. Component of the cytochrome c oxidase, the last enzyme in the mitochondrial electron transport chain which drives oxidative phosphorylation. The respiratory chain contains 3 multisubunit complexes succinate dehydrogenase (complex II, CII), ubiquinol-cytochrome c oxidoreductase (cytochrome b-c1 complex, complex III, CIII) and cytochrome c oxidase (complex IV, CIV), that cooperate to transfer electrons derived from NADH and succinate to molecular oxygen, creating an electrochemical gradient over the inner membrane that drives transmembrane transport and the ATP synthase. Cytochrome c oxidase is the component of the respiratory chain that catalyzes the reduction of oxygen to water. Electrons originating from reduced cytochrome c in the intermembrane space (IMS) are transferred via the dinuclear copper A center (CU(A)) of subunit 2 and heme A of subunit 1 to the active site in subunit 1, a binuclear center (BNC) formed by heme A3 and copper B (CU(B)). The BNC reduces molecular oxygen to 2 water molecules using 4 electrons from cytochrome c in the IMS and 4 protons from the mitochondrial matrix. This is Cytochrome c oxidase subunit 5 (cxeA) from Dictyostelium discoideum (Social amoeba).